The following is a 705-amino-acid chain: Zinc finger protein 770 (705 aa).

A Glycyl lysine isopeptide (Lys-Gly) (interchain with G-Cter in SUMO2) cross-link involves residue lysine 16. C2H2-type zinc fingers lie at residues tyrosine 31–histidine 53, phenylalanine 59–histidine 81, and phenylalanine 85–histidine 107. Residues lysine 116, lysine 124, and lysine 149 each participate in a glycyl lysine isopeptide (Lys-Gly) (interchain with G-Cter in SUMO2) cross-link. 3 consecutive C2H2-type zinc fingers follow at residues histidine 164 to histidine 186, phenylalanine 192 to histidine 214, and phenylalanine 220 to histidine 242. A Glycyl lysine isopeptide (Lys-Gly) (interchain with G-Cter in SUMO2) cross-link involves residue lysine 266. The C2H2-type 7; degenerate zinc-finger motif lies at phenylalanine 298–arginine 322. 4 consecutive C2H2-type zinc fingers follow at residues cysteine 485–histidine 507, phenylalanine 513–histidine 535, tyrosine 640–histidine 662, and phenylalanine 668–histidine 690. A Glycyl lysine isopeptide (Lys-Gly) (interchain with G-Cter in SUMO2) cross-link involves residue lysine 698.

It belongs to the krueppel C2H2-type zinc-finger protein family.

The protein resides in the nucleus. Its function is as follows. May be involved in transcriptional regulation. The protein is Zinc finger protein 770 (Znf770) of Mus musculus (Mouse).